Here is a 307-residue protein sequence, read N- to C-terminus: MPRSFLVKKIKGDGFQCSGVPAPTYHPLETAYVLPGARGPPGDNGYAPHRLPPSSYDADQKPGLELAPAEPAYPPAAPEEYSDPESPQSSLSARYFRGEAAVTDSYSMDAFFISDGRSRRRRGGGGGDAGGSGDAGGAGGRAGRAGAQAGGGHRHACAECGKTYATSSNLSRHKQTHRSLDSQLARKCPTCGKAYVSMPALAMHLLTHNLRHKCGVCGKAFSRPWLLQGHMRSHTGEKPFGCAHCGKAFADRSNLRAHMQTHSAFKHYRCRQCDKSFALKSYLHKHCEAACAKAAEPPPPTPAGPAS.

An SNAG domain region spans residues 1–20 (MPRSFLVKKIKGDGFQCSGV). 2 disordered regions span residues 34-90 (LPGA…PQSS) and 116-148 (GRSR…AGAQ). Positions 124 to 148 (GGGGDAGGSGDAGGAGGRAGRAGAQ) are enriched in gly residues. 4 consecutive C2H2-type zinc fingers follow at residues 155–177 (HACA…KQTH), 186–208 (RKCP…LLTH), 212–234 (HKCG…MRSH), and 240–262 (FGCA…MQTH). A C2H2-type 5; atypical zinc finger spans residues 268–291 (YRCRQCDKSFALKSYLHKHCEAAC).

The protein belongs to the snail C2H2-type zinc-finger protein family.

It is found in the nucleus. Its function is as follows. May be involved in transcriptional regulation. This Homo sapiens (Human) protein is Transcriptional repressor scratch 2 (SCRT2).